The following is a 327-amino-acid chain: Elongation factor P--(R)-beta-lysine ligase (327 aa).

78 to 80 lines the substrate pocket; it reads SPE. ATP-binding positions include 102–104 and Asn-111; that span reads RNQ. Tyr-120 is a binding site for substrate. 246-247 provides a ligand contact to ATP; it reads EL. Position 253 (Glu-253) interacts with substrate. Gly-302 provides a ligand contact to ATP.

The protein belongs to the class-II aminoacyl-tRNA synthetase family. EpmA subfamily. In terms of assembly, homodimer.

It carries out the reaction D-beta-lysine + L-lysyl-[protein] + ATP = N(6)-((3R)-3,6-diaminohexanoyl)-L-lysyl-[protein] + AMP + diphosphate + H(+). Its function is as follows. With EpmB is involved in the beta-lysylation step of the post-translational modification of translation elongation factor P (EF-P). Catalyzes the ATP-dependent activation of (R)-beta-lysine produced by EpmB, forming a lysyl-adenylate, from which the beta-lysyl moiety is then transferred to the epsilon-amino group of a conserved specific lysine residue in EF-P. In Baumannia cicadellinicola subsp. Homalodisca coagulata, this protein is Elongation factor P--(R)-beta-lysine ligase.